A 312-amino-acid polypeptide reads, in one-letter code: tRNA uridine(34) hydroxylase (312 aa).

The Rhodanese domain occupies 124 to 218 (SDPEVLLIDT…YLEEVPQEQT (95 aa)). Cysteine 178 acts as the Cysteine persulfide intermediate in catalysis. Composition is skewed to basic and acidic residues over residues 279–294 (TRES…ELAR) and 302–312 (IGRDPRQLNEA). Residues 279-312 (TRESARERQKQIELARARNQPHPIGRDPRQLNEA) are disordered.

Belongs to the TrhO family.

The enzyme catalyses uridine(34) in tRNA + AH2 + O2 = 5-hydroxyuridine(34) in tRNA + A + H2O. In terms of biological role, catalyzes oxygen-dependent 5-hydroxyuridine (ho5U) modification at position 34 in tRNAs. This Ectopseudomonas mendocina (strain ymp) (Pseudomonas mendocina) protein is tRNA uridine(34) hydroxylase.